The chain runs to 256 residues: Pimeloyl-[acyl-carrier protein] methyl ester esterase (256 aa).

The AB hydrolase-1 domain occupies 15–242 (HLVLLHGWGL…AAHAPFISHP (228 aa)). Substrate is bound by residues Trp-22, 82 to 83 (SL), and 143 to 147 (FLALQ). Ser-82 functions as the Nucleophile in the catalytic mechanism. Catalysis depends on residues Asp-207 and His-235. His-235 is a substrate binding site.

Belongs to the AB hydrolase superfamily. Carboxylesterase BioH family. Monomer.

It is found in the cytoplasm. It carries out the reaction 6-carboxyhexanoyl-[ACP] methyl ester + H2O = 6-carboxyhexanoyl-[ACP] + methanol + H(+). Its pathway is cofactor biosynthesis; biotin biosynthesis. In terms of biological role, the physiological role of BioH is to remove the methyl group introduced by BioC when the pimeloyl moiety is complete. It allows to synthesize pimeloyl-ACP via the fatty acid synthetic pathway through the hydrolysis of the ester bonds of pimeloyl-ACP esters. In Escherichia coli (strain SMS-3-5 / SECEC), this protein is Pimeloyl-[acyl-carrier protein] methyl ester esterase.